The primary structure comprises 250 residues: Hydroxyacylglutathione hydrolase (250 aa).

Positions 52, 54, 56, 57, 107, 128, and 166 each coordinate Zn(2+).

The protein belongs to the metallo-beta-lactamase superfamily. Glyoxalase II family. As to quaternary structure, monomer. It depends on Zn(2+) as a cofactor.

It carries out the reaction an S-(2-hydroxyacyl)glutathione + H2O = a 2-hydroxy carboxylate + glutathione + H(+). Its pathway is secondary metabolite metabolism; methylglyoxal degradation; (R)-lactate from methylglyoxal: step 2/2. Thiolesterase that catalyzes the hydrolysis of S-D-lactoyl-glutathione to form glutathione and D-lactic acid. This is Hydroxyacylglutathione hydrolase from Neisseria gonorrhoeae (strain NCCP11945).